Here is a 176-residue protein sequence, read N- to C-terminus: ATP-dependent protease subunit HslV (176 aa).

Residue Thr-2 is part of the active site. Gly-157, Cys-160, and Thr-163 together coordinate Na(+).

This sequence belongs to the peptidase T1B family. HslV subfamily. In terms of assembly, a double ring-shaped homohexamer of HslV is capped on each side by a ring-shaped HslU homohexamer. The assembly of the HslU/HslV complex is dependent on binding of ATP.

It is found in the cytoplasm. It catalyses the reaction ATP-dependent cleavage of peptide bonds with broad specificity.. With respect to regulation, allosterically activated by HslU binding. In terms of biological role, protease subunit of a proteasome-like degradation complex believed to be a general protein degrading machinery. The sequence is that of ATP-dependent protease subunit HslV from Ectopseudomonas mendocina (strain ymp) (Pseudomonas mendocina).